A 145-amino-acid chain; its full sequence is Deoxyuridine 5'-triphosphate nucleotidohydrolase (145 aa).

Substrate contacts are provided by residues 64-66 (RSG), N77, 81-83 (TID), and M91.

It belongs to the dUTPase family. It depends on Mg(2+) as a cofactor.

The catalysed reaction is dUTP + H2O = dUMP + diphosphate + H(+). It functions in the pathway pyrimidine metabolism; dUMP biosynthesis; dUMP from dCTP (dUTP route): step 2/2. This enzyme is involved in nucleotide metabolism: it produces dUMP, the immediate precursor of thymidine nucleotides and it decreases the intracellular concentration of dUTP so that uracil cannot be incorporated into DNA. The polypeptide is Deoxyuridine 5'-triphosphate nucleotidohydrolase (Leptospira borgpetersenii serovar Hardjo-bovis (strain JB197)).